We begin with the raw amino-acid sequence, 578 residues long: Phosphatase DCR2 (578 aa).

Residue 116–123 (GRRWFGKS) coordinates ATP.

Its subcellular location is the cytoplasm. Its function is as follows. Required for cell cycle progression. Has a role in the completion of START. This chain is Phosphatase DCR2 (DCR2), found in Saccharomyces cerevisiae (strain ATCC 204508 / S288c) (Baker's yeast).